A 586-amino-acid chain; its full sequence is Proteasome-associated ATPase (586 aa).

Residues 11–76 are a coiled coil; sequence AWRELEAVRA…LREEVDRLGQ (66 aa). An ATP-binding site is contributed by 273-278; the sequence is GCGKTL. The tract at residues 585–586 is docks into pockets in the proteasome alpha-ring; the sequence is YL.

This sequence belongs to the AAA ATPase family. In terms of assembly, homohexamer. Assembles into a hexameric ring structure that caps the 20S proteasome core. Strongly interacts with the prokaryotic ubiquitin-like protein Pup through a hydrophobic interface; the interacting region of ARC lies in its N-terminal coiled-coil domain. There is one Pup binding site per ARC hexamer ring. Upon ATP-binding, the C-terminus of ARC interacts with the alpha-rings of the proteasome core, possibly by binding to the intersubunit pockets.

The protein operates within protein degradation; proteasomal Pup-dependent pathway. In terms of biological role, ATPase which is responsible for recognizing, binding, unfolding and translocation of pupylated proteins into the bacterial 20S proteasome core particle. May be essential for opening the gate of the 20S proteasome via an interaction with its C-terminus, thereby allowing substrate entry and access to the site of proteolysis. Thus, the C-termini of the proteasomal ATPase may function like a 'key in a lock' to induce gate opening and therefore regulate proteolysis. In Nocardia farcinica (strain IFM 10152), this protein is Proteasome-associated ATPase.